We begin with the raw amino-acid sequence, 369 residues long: Deoxyhypusine synthase (369 aa).

Residues 105–109, 131–133, Glu-137, and Asp-238 contribute to the NAD(+) site; these read SNLIS and TAG. A spermidine-binding site is contributed by 136–137; that stretch reads EE. Asp-243 provides a ligand contact to spermidine. Position 283 (Gly-283) interacts with NAD(+). Position 288 (His-288) interacts with spermidine. 308–309 lines the NAD(+) pocket; sequence TA. Spermidine contacts are provided by residues 314 to 316 and 323 to 329; these read GSD and EAVSWGK. Residue Lys-329 is the Nucleophile of the active site. 342–343 is an NAD(+) binding site; the sequence is DA.

The protein belongs to the deoxyhypusine synthase family. It depends on NAD(+) as a cofactor.

It catalyses the reaction [eIF5A protein]-L-lysine + spermidine = [eIF5A protein]-deoxyhypusine + propane-1,3-diamine. It functions in the pathway protein modification; eIF5A hypusination. Its function is as follows. Catalyzes the NAD-dependent oxidative cleavage of spermidine and the subsequent transfer of the butylamine moiety of spermidine to the epsilon-amino group of a critical lysine residue of the eIF-5A precursor protein to form the intermediate deoxyhypusine residue. This is the first step of the post-translational modification of that lysine into an unusual amino acid residue named hypusine. Hypusination is unique to mature eIF-5A factor and is essential for its function. The polypeptide is Deoxyhypusine synthase (Dhps) (Rattus norvegicus (Rat)).